Consider the following 1430-residue polypeptide: Gag-Pol polyprotein (1430 aa).

The N-myristoyl glycine; by host moiety is linked to residue Gly2. Residues 7 to 31 (VLSGGKLDAWEKIRLRPGGKKKYRL) form an interaction with Gp41 region. The segment at 8 to 43 (LSGGKLDAWEKIRLRPGGKKKYRLKHLVWASRELER) is interaction with host CALM1. Positions 12 to 19 (KLDAWEKI) are interaction with host AP3D1. The interval 14–33 (DAWEKIRLRPGGKKKYRLKH) is interaction with membrane phosphatidylinositol 4,5-bisphosphate and RNA. The Nuclear export signal signature appears at 16–22 (WEKIRLR). The Nuclear localization signal motif lies at 26–32 (KKKYRLK). Positions 73-77 (EELKS) are interaction with membrane phosphatidylinositol 4,5-bisphosphate. Tyr128 is modified (phosphotyrosine; by host). An interaction with human PPIA/CYPA and NUP153 region spans residues 185 to 223 (NTVGGHQAAMQMLKDTINEEAAEWDRLHPTQAGPIPPGQ). The tract at residues 273–359 (YSPVGILDIR…GGPSHKARVL (87 aa)) is dimerization/Multimerization of capsid protein p24. CCHC-type zinc fingers lie at residues 385 to 402 (VKCF…NCRA) and 406 to 423 (KGCW…DCTE). The segment at 451–474 (VSPASRELQVRGGDNPISEAGAER) is disordered. A dimerization of protease region spans residues 484 to 488 (PQITL). The Peptidase A2 domain maps to 503–572 (KEALLDTGAD…TPVNIIGRNM (70 aa)). The active-site For protease activity; shared with dimeric partner is the Asp508. 2 dimerization of protease regions span residues 532 to 538 (GIGGFIK) and 571 to 583 (NMLT…LHFP). The 191-residue stretch at 626–816 (EGKISKIGPE…PPFLWMGYEL (191 aa)) folds into the Reverse transcriptase domain. The Mg(2+) site is built by Asp692, Asp767, and Asp768. The segment at 809–817 (FLWMGYELH) is RT 'primer grip'. A Tryptophan repeat motif motif is present at residues 980 to 996 (WDTWWTEYWQATWIPEW). The RNase H type-1 domain occupies 1016–1139 (IVGAETFYVD…VDKLVSAGIR (124 aa)). Residues Asp1025, Glu1060, Asp1080, and Asp1131 each coordinate Mg(2+). An Integrase-type zinc finger spans residues 1145–1186 (DGIDKAQEEHEKYHNNWRAMASDFNIPAVVAKEIVASCDKCQ). 4 residues coordinate Zn(2+): His1154, His1158, Cys1182, and Cys1185. In terms of domain architecture, Integrase catalytic spans 1196–1346 (VDCSPGIWQL…SAGERTIDII (151 aa)). 3 residues coordinate Mg(2+): Asp1206, Asp1258, and Glu1294. The integrase-type DNA-binding region spans 1365–1412 (FRVYYRDSRDPVWKGPAKLLWKGEGAVVIQDNSEIKVVPRRKAKIIRD).

As to quaternary structure, homotrimer; further assembles as hexamers of trimers. Interacts with gp41 (via C-terminus). Interacts with host CALM1; this interaction induces a conformational change in the Matrix protein, triggering exposure of the myristate group. Interacts with host AP3D1; this interaction allows the polyprotein trafficking to multivesicular bodies during virus assembly. Part of the pre-integration complex (PIC) which is composed of viral genome, matrix protein, Vpr and integrase. In terms of assembly, homodimer; the homodimer further multimerizes as homohexamers or homopentamers. Interacts with human PPIA/CYPA; This interaction stabilizes the capsid. Interacts with human NUP153. Interacts with host PDZD8; this interaction stabilizes the capsid. Interacts with monkey TRIM5; this interaction destabilizes the capsid. Homodimer, whose active site consists of two apposed aspartic acid residues. As to quaternary structure, heterodimer of p66 RT and p51 RT (RT p66/p51). Heterodimerization of RT is essential for DNA polymerase activity. The overall folding of the subdomains is similar in p66 RT and p51 RT but the spatial arrangements of the subdomains are dramatically different. In terms of assembly, homotetramer; may further associate as a homohexadecamer. Part of the pre-integration complex (PIC) which is composed of viral genome, matrix protein, Vpr and integrase. Interacts with human SMARCB1/INI1 and human PSIP1/LEDGF isoform 1. Interacts with human KPNA3; this interaction might play a role in nuclear import of the pre-integration complex. Interacts with human NUP153; this interaction might play a role in nuclear import of the pre-integration complex. It depends on Mg(2+) as a cofactor. Post-translationally, specific enzymatic cleavages by the viral protease yield mature proteins. The protease is released by autocatalytic cleavage. The polyprotein is cleaved during and after budding, this process is termed maturation. Proteolytic cleavage of p66 RT removes the RNase H domain to yield the p51 RT subunit. Nucleocapsid protein p7 might be further cleaved after virus entry. In terms of processing, tyrosine phosphorylated presumably in the virion by a host kinase. Phosphorylation is apparently not a major regulator of membrane association. Phosphorylated possibly by host MAPK1; this phosphorylation is necessary for Pin1-mediated virion uncoating. Post-translationally, methylated by host PRMT6, impairing its function by reducing RNA annealing and the initiation of reverse transcription.

Its subcellular location is the host cell membrane. It localises to the host endosome. The protein localises to the host multivesicular body. The protein resides in the virion membrane. It is found in the host nucleus. Its subcellular location is the host cytoplasm. It localises to the virion. The catalysed reaction is Specific for a P1 residue that is hydrophobic, and P1' variable, but often Pro.. It catalyses the reaction Endohydrolysis of RNA in RNA/DNA hybrids. Three different cleavage modes: 1. sequence-specific internal cleavage of RNA. Human immunodeficiency virus type 1 and Moloney murine leukemia virus enzymes prefer to cleave the RNA strand one nucleotide away from the RNA-DNA junction. 2. RNA 5'-end directed cleavage 13-19 nucleotides from the RNA end. 3. DNA 3'-end directed cleavage 15-20 nucleotides away from the primer terminus.. It carries out the reaction 3'-end directed exonucleolytic cleavage of viral RNA-DNA hybrid.. The enzyme catalyses DNA(n) + a 2'-deoxyribonucleoside 5'-triphosphate = DNA(n+1) + diphosphate. Protease: The viral protease is inhibited by many synthetic protease inhibitors (PIs), such as amprenavir, atazanavir, indinavir, loprinavir, nelfinavir, ritonavir and saquinavir. Use of protease inhibitors in tritherapy regimens permit more ambitious therapeutic strategies. Reverse transcriptase/ribonuclease H: RT can be inhibited either by nucleoside RT inhibitors (NRTIs) or by non nucleoside RT inhibitors (NNRTIs). NRTIs act as chain terminators, whereas NNRTIs inhibit DNA polymerization by binding a small hydrophobic pocket near the RT active site and inducing an allosteric change in this region. Classical NRTIs are abacavir, adefovir (PMEA), didanosine (ddI), lamivudine (3TC), stavudine (d4T), tenofovir (PMPA), zalcitabine (ddC), and zidovudine (AZT). Classical NNRTIs are atevirdine (BHAP U-87201E), delavirdine, efavirenz (DMP-266), emivirine (I-EBU), and nevirapine (BI-RG-587). The tritherapies used as a basic effective treatment of AIDS associate two NRTIs and one NNRTI. Functionally, mediates, with Gag polyprotein, the essential events in virion assembly, including binding the plasma membrane, making the protein-protein interactions necessary to create spherical particles, recruiting the viral Env proteins, and packaging the genomic RNA via direct interactions with the RNA packaging sequence (Psi). Gag-Pol polyprotein may regulate its own translation, by the binding genomic RNA in the 5'-UTR. At low concentration, the polyprotein would promote translation, whereas at high concentration, the polyprotein would encapsidate genomic RNA and then shut off translation. In terms of biological role, targets the polyprotein to the plasma membrane via a multipartite membrane-binding signal, that includes its myristoylated N-terminus. Matrix protein is part of the pre-integration complex. Implicated in the release from host cell mediated by Vpu. Binds to RNA. Its function is as follows. Forms the conical core that encapsulates the genomic RNA-nucleocapsid complex in the virion. Most core are conical, with only 7% tubular. The core is constituted by capsid protein hexamer subunits. The core is disassembled soon after virion entry. Host restriction factors such as TRIM5-alpha or TRIMCyp bind retroviral capsids and cause premature capsid disassembly, leading to blocks in reverse transcription. Capsid restriction by TRIM5 is one of the factors which restricts HIV-1 to the human species. Host PIN1 apparently facilitates the virion uncoating. On the other hand, interactions with PDZD8 or CYPA stabilize the capsid. Encapsulates and protects viral dimeric unspliced genomic RNA (gRNA). Binds these RNAs through its zinc fingers. Acts as a nucleic acid chaperone which is involved in rearangement of nucleic acid secondary structure during gRNA retrotranscription. Also facilitates template switch leading to recombination. As part of the polyprotein, participates in gRNA dimerization, packaging, tRNA incorporation and virion assembly. Functionally, aspartyl protease that mediates proteolytic cleavages of Gag and Gag-Pol polyproteins during or shortly after the release of the virion from the plasma membrane. Cleavages take place as an ordered, step-wise cascade to yield mature proteins. This process is called maturation. Displays maximal activity during the budding process just prior to particle release from the cell. Also cleaves Nef and Vif, probably concomitantly with viral structural proteins on maturation of virus particles. Hydrolyzes host EIF4GI and PABP1 in order to shut off the capped cellular mRNA translation. The resulting inhibition of cellular protein synthesis serves to ensure maximal viral gene expression and to evade host immune response. Also mediates cleavage of host YTHDF3. Mediates cleavage of host CARD8, thereby activating the CARD8 inflammasome, leading to the clearance of latent HIV-1 in patient CD4(+) T-cells after viral reactivation; in contrast, HIV-1 can evade CARD8-sensing when its protease remains inactive in infected cells prior to viral budding. In terms of biological role, multifunctional enzyme that converts the viral RNA genome into dsDNA in the cytoplasm, shortly after virus entry into the cell. This enzyme displays a DNA polymerase activity that can copy either DNA or RNA templates, and a ribonuclease H (RNase H) activity that cleaves the RNA strand of RNA-DNA heteroduplexes in a partially processive 3' to 5' endonucleasic mode. Conversion of viral genomic RNA into dsDNA requires many steps. A tRNA(3)-Lys binds to the primer-binding site (PBS) situated at the 5'-end of the viral RNA. RT uses the 3' end of the tRNA primer to perform a short round of RNA-dependent minus-strand DNA synthesis. The reading proceeds through the U5 region and ends after the repeated (R) region which is present at both ends of viral RNA. The portion of the RNA-DNA heteroduplex is digested by the RNase H, resulting in a ssDNA product attached to the tRNA primer. This ssDNA/tRNA hybridizes with the identical R region situated at the 3' end of viral RNA. This template exchange, known as minus-strand DNA strong stop transfer, can be either intra- or intermolecular. RT uses the 3' end of this newly synthesized short ssDNA to perform the RNA-dependent minus-strand DNA synthesis of the whole template. RNase H digests the RNA template except for two polypurine tracts (PPTs) situated at the 5'-end and near the center of the genome. It is not clear if both polymerase and RNase H activities are simultaneous. RNase H probably can proceed both in a polymerase-dependent (RNA cut into small fragments by the same RT performing DNA synthesis) and a polymerase-independent mode (cleavage of remaining RNA fragments by free RTs). Secondly, RT performs DNA-directed plus-strand DNA synthesis using the PPTs that have not been removed by RNase H as primers. PPTs and tRNA primers are then removed by RNase H. The 3' and 5' ssDNA PBS regions hybridize to form a circular dsDNA intermediate. Strand displacement synthesis by RT to the PBS and PPT ends produces a blunt ended, linear dsDNA copy of the viral genome that includes long terminal repeats (LTRs) at both ends. Its function is as follows. Integrase catalyzes viral DNA integration into the host chromosome, by performing a series of DNA cutting and joining reactions. This enzyme activity takes place after virion entry into a cell and reverse transcription of the RNA genome in dsDNA. The first step in the integration process is 3' processing. This step requires a complex comprising the viral genome, matrix protein, Vpr and integrase. This complex is called the pre-integration complex (PIC). The integrase protein removes 2 nucleotides from each 3' end of the viral DNA, leaving recessed CA OH's at the 3' ends. In the second step, the PIC enters cell nucleus. This process is mediated through integrase and Vpr proteins, and allows the virus to infect a non dividing cell. This ability to enter the nucleus is specific of lentiviruses, other retroviruses cannot and rely on cell division to access cell chromosomes. In the third step, termed strand transfer, the integrase protein joins the previously processed 3' ends to the 5' ends of strands of target cellular DNA at the site of integration. The 5'-ends are produced by integrase-catalyzed staggered cuts, 5 bp apart. A Y-shaped, gapped, recombination intermediate results, with the 5'-ends of the viral DNA strands and the 3' ends of target DNA strands remaining unjoined, flanking a gap of 5 bp. The last step is viral DNA integration into host chromosome. This involves host DNA repair synthesis in which the 5 bp gaps between the unjoined strands are filled in and then ligated. Since this process occurs at both cuts flanking the HIV genome, a 5 bp duplication of host DNA is produced at the ends of HIV-1 integration. Alternatively, Integrase may catalyze the excision of viral DNA just after strand transfer, this is termed disintegration. In Homo sapiens (Human), this protein is Gag-Pol polyprotein (gag-pol).